The chain runs to 163 residues: Large ribosomal subunit protein bL17 (163 aa).

Residues 127-163 form a disordered region; that stretch reads KEVKKAKSRRGGKAKKAEGTAPEAPAAESESTTEASE. A compositionally biased stretch (basic residues) spans 128-140; the sequence is EVKKAKSRRGGKA. Over residues 145-163 the composition is skewed to low complexity; sequence GTAPEAPAAESESTTEASE.

It belongs to the bacterial ribosomal protein bL17 family. Part of the 50S ribosomal subunit. Contacts protein L32.

The protein is Large ribosomal subunit protein bL17 of Flavobacterium johnsoniae (strain ATCC 17061 / DSM 2064 / JCM 8514 / BCRC 14874 / CCUG 350202 / NBRC 14942 / NCIMB 11054 / UW101) (Cytophaga johnsonae).